The sequence spans 157 residues: Monooxygenase CPUR_05417 (157 aa).

Belongs to the avfA family.

It participates in secondary metabolite biosynthesis. In terms of biological role, monooxygenase; part of the ergochrome gene cluster responsible for the typical purple-black color of the ergot sclerotia. The ergochrome gene cluster produces several ergot pigments including the yellow ergochrome secalonic acid and its derivatives, as well as the red anthraquinones endocrocin and clavorubin. The pathway begins with the synthesis of atrochrysone thioester by the polyketide synthase (PKS) CPUR_05437. The atrochrysone carboxyl ACP thioesterase CPUR_05436 then breaks the thioester bond and releases the atrochrysone carboxylic acid from CPUR_05437. The atrochrysone carboxylic acid is then converted to atrochrysone which is further transformed into emodin anthrone. The next step is performed by the anthrone oxygenase CPUR_05434 that catalyzes the oxidation of emodinanthrone to emodin. Emodin is further modified to yield monodictyphenone via several steps involving CPUR_05427, CPUR_05428, CPUR_05429 and CPUR_05430. The short chain dehydrogenase/reductase CPUR_05418 then catalyzes the C-5 ketoreduction to give the xanthone skeleton of the monomeric units. Ergochromes formation requires further dimerization steps of different xanthone units, probably catalyzed by the cytochrome P450 monooxygenase CPUR_05419. CPUR_05425, CPUR_05426 and CPUR_05431 are unique to Claviceps, thus it is likely that they are involved in further modification of xanthone units or in their dimerization. The yellow ergochromes and the red anthraquinone pigments endocrocin and clavorubin are products from the same PKS derived precursors and the latter are likely shunt products in the pathway of xanthone biosynthesis. It is proposed that atrochrysone carboxylic acid released from the PKS CPUR_05437 can also be converted to endocrocin anthrone which is further oxidized into endocrocin by CPUR_05435. Endocrocin could be then modified to clavorubin, possibly by CPUR_05423 and CPUR_05431. Clavorubin is the principal anthraquinone metabolite produced by the cluster with a much higher yield compared to endocrocin. The protein is Monooxygenase CPUR_05417 of Claviceps purpurea (strain 20.1) (Ergot fungus).